A 271-amino-acid polypeptide reads, in one-letter code: UPF0758 protein ACIAD3126 (271 aa).

Residues 120–242 (NLNSSRLVLD…TFSFAERALL (123 aa)) form the MPN domain. 3 residues coordinate Zn(2+): His191, His193, and Asp204. The JAMM motif signature appears at 191-204 (HNHPFGKAEPSAAD).

This sequence belongs to the UPF0758 family.

The chain is UPF0758 protein ACIAD3126 from Acinetobacter baylyi (strain ATCC 33305 / BD413 / ADP1).